The primary structure comprises 521 residues: Spermidine transporter DUR31 (521 aa).

A helical transmembrane segment spans residues 11-31 (AIIYLSYAFMLATGLFLAWKF). N41 carries an N-linked (GlcNAc...) asparagine glycan. A run of 12 helical transmembrane segments spans residues 47–67 (IPLALNFVASAMGVGIITTYA), 79–99 (LVYTICGAIPIVGFAVVGPVI), 117–137 (FGMVTALYLSAFTCLTMFLFM), 156–176 (ALGAVIVECVVTTIYTFFGGF), 187–207 (GVCVLLLLIICAAGMGSYIEI), 227–247 (LVYILFVAIVTNDCFMSGFWL), 264–284 (IAAFVTFAICTLIGTTGFLAV), 310–330 (WLVAFVLIFCIVLSTCTFDSL), 354–374 (IMLILIMVPIVVLAVKVADNI), 377–397 (IYLIADLVSAAIIPSVFLGLA), 406–426 (GFDVMAGGLGALLGVFIFGTV), and 453–473 (FGAFVIAPVGGVIITLASAAL).

The protein belongs to the sodium:solute symporter (SSF) (TC 2.A.21) family.

It localises to the membrane. It carries out the reaction spermidine(in) = spermidine(out). Spermidine transporter that is also used by salivary gland-secreted histatin 5 (Hst 5) to enter into candidal cells. A major component of host nonimmune defense systems is salivary histatins, a family of small (3-4 kDa), histidine-rich, cationic proteins secreted by major salivary glands in humans and higher primates. Hst 5 is the most potent of the 12 histatin family members and has fungicidal activity against blastoconidial and filamentous forms of Candida albicans. DUR31 only functions under high concentrations of Hst 5. Hst 5 cojugates to spermidine to be uptaken by DUR31. The chain is Spermidine transporter DUR31 from Candida albicans (strain SC5314 / ATCC MYA-2876) (Yeast).